The following is a 129-amino-acid chain: Small ribosomal subunit protein bS6 (129 aa).

This sequence belongs to the bacterial ribosomal protein bS6 family.

Binds together with bS18 to 16S ribosomal RNA. The protein is Small ribosomal subunit protein bS6 of Pelobacter propionicus (strain DSM 2379 / NBRC 103807 / OttBd1).